The chain runs to 98 residues: NADH-ubiquinone oxidoreductase chain 4L (98 aa).

The next 3 membrane-spanning stretches (helical) occupy residues 1 to 21 (MTPI…GLAF), 26 to 46 (LLSA…ALSL), and 59 to 79 (APML…ALMV).

It belongs to the complex I subunit 4L family.

The protein resides in the mitochondrion membrane. It catalyses the reaction a ubiquinone + NADH + 5 H(+)(in) = a ubiquinol + NAD(+) + 4 H(+)(out). In terms of biological role, core subunit of the mitochondrial membrane respiratory chain NADH dehydrogenase (Complex I) which catalyzes electron transfer from NADH through the respiratory chain, using ubiquinone as an electron acceptor. Part of the enzyme membrane arm which is embedded in the lipid bilayer and involved in proton translocation. This is NADH-ubiquinone oxidoreductase chain 4L (MT-ND4L) from Tetraodon nigroviridis (Spotted green pufferfish).